A 444-amino-acid polypeptide reads, in one-letter code: Methylenetetrahydrofolate--tRNA-(uracil-5-)-methyltransferase TrmFO (444 aa).

Glycine 10–glycine 15 provides a ligand contact to FAD.

It belongs to the MnmG family. TrmFO subfamily. FAD is required as a cofactor.

It localises to the cytoplasm. It carries out the reaction uridine(54) in tRNA + (6R)-5,10-methylene-5,6,7,8-tetrahydrofolate + NADH + H(+) = 5-methyluridine(54) in tRNA + (6S)-5,6,7,8-tetrahydrofolate + NAD(+). The catalysed reaction is uridine(54) in tRNA + (6R)-5,10-methylene-5,6,7,8-tetrahydrofolate + NADPH + H(+) = 5-methyluridine(54) in tRNA + (6S)-5,6,7,8-tetrahydrofolate + NADP(+). In terms of biological role, catalyzes the folate-dependent formation of 5-methyl-uridine at position 54 (M-5-U54) in all tRNAs. The chain is Methylenetetrahydrofolate--tRNA-(uracil-5-)-methyltransferase TrmFO from Streptococcus equi subsp. zooepidemicus (strain H70).